The following is a 455-amino-acid chain: Serine--tRNA ligase (455 aa).

L-serine is bound at residue 252–254 (TAE). ATP contacts are provided by residues 283–285 (RKE) and V299. Position 306 (E306) interacts with L-serine. Residue 370–373 (EVVS) coordinates ATP. Residue T406 participates in L-serine binding.

The protein belongs to the class-II aminoacyl-tRNA synthetase family. Type-1 seryl-tRNA synthetase subfamily. Homodimer. The tRNA molecule binds across the dimer.

The protein localises to the cytoplasm. It carries out the reaction tRNA(Ser) + L-serine + ATP = L-seryl-tRNA(Ser) + AMP + diphosphate + H(+). It catalyses the reaction tRNA(Sec) + L-serine + ATP = L-seryl-tRNA(Sec) + AMP + diphosphate + H(+). It participates in aminoacyl-tRNA biosynthesis; selenocysteinyl-tRNA(Sec) biosynthesis; L-seryl-tRNA(Sec) from L-serine and tRNA(Sec): step 1/1. In terms of biological role, catalyzes the attachment of serine to tRNA(Ser). Is also able to aminoacylate tRNA(Sec) with serine, to form the misacylated tRNA L-seryl-tRNA(Sec), which will be further converted into selenocysteinyl-tRNA(Sec). The sequence is that of Serine--tRNA ligase from Pyrococcus furiosus (strain ATCC 43587 / DSM 3638 / JCM 8422 / Vc1).